A 644-amino-acid polypeptide reads, in one-letter code: NADH-ubiquinone oxidoreductase chain 5 (644 aa).

A run of 18 helical transmembrane segments spans residues 4–23 (FITL…RYIG), 30–49 (LNII…YINI), 78–100 (DLLS…IFAW), 112–129 (FYTY…LVLG), 133–155 (LILF…FWYN), 167–189 (LFIN…YIYK), 199–221 (LVSY…AASA), 234–256 (WAMA…IAGI), 271–293 (NILL…IAIN), 300–322 (IIAL…SSYN), 327–349 (HVLC…IHSL), 361–383 (GLLI…LMGL), 398–420 (SSIG…SSLL), 466–488 (SWMA…YLLQ), 517–539 (INIY…IIYL), 546–568 (LLYI…RFLF), 594–616 (GFLY…FNII), and 623–642 (FNHY…YLQF).

The protein belongs to the complex I subunit 5 family.

It localises to the mitochondrion inner membrane. It catalyses the reaction a ubiquinone + NADH + 5 H(+)(in) = a ubiquinol + NAD(+) + 4 H(+)(out). Core subunit of the mitochondrial membrane respiratory chain NADH dehydrogenase (Complex I) that is believed to belong to the minimal assembly required for catalysis. Complex I functions in the transfer of electrons from NADH to the respiratory chain. The immediate electron acceptor for the enzyme is believed to be ubiquinone. In Wickerhamomyces canadensis (Yeast), this protein is NADH-ubiquinone oxidoreductase chain 5 (ND5).